A 284-amino-acid chain; its full sequence is UPF0761 membrane protein IL2447 (284 aa).

The next 6 helical transmembrane spans lie at 41–61 (MLSLVPLLVVMFTVFSAFPMF), 98–118 (MTAIGVGFLFIVAIMLMSAID), 137–157 (FAVYWMLLTLGPVLIGSGLAA), 178–198 (FVLWFVPIVTSFVFFVLMYQL), 214–234 (VIAALLFELSKQLFSLYITFF), and 247–267 (IPILIVWIYLSWLIVLIGAVL).

It belongs to the UPF0761 family.

The protein localises to the cell inner membrane. This Idiomarina loihiensis (strain ATCC BAA-735 / DSM 15497 / L2-TR) protein is UPF0761 membrane protein IL2447.